The chain runs to 1166 residues: Poly [ADP-ribose] polymerase tankyrase-2 (1166 aa).

3 ANK repeats span residues 57–89 (RKST…ARDD), 90–122 (GGLI…ARDN), and 123–155 (WNYT…IRNT). The residue at position 203 (Asn203) is a (3S)-3-hydroxyasparagine; by HIF1AN; partial. ANK repeat units lie at residues 210-242 (RKST…AKDK), 243-275 (GDLV…AMDL), 276-308 (WQFT…LLNC), 363-398 (THET…EKTK), 399-431 (EFLT…ALDN), and 432-464 (LGQT…IISL). The residue at position 238 (His238) is a (3S)-3-hydroxyhistidine; by HIF1AN; partial. A (3S)-3-hydroxyasparagine; by HIF1AN; partial modification is found at Asn271. (3S)-3-hydroxyasparagine; by HIF1AN; partial is present on Asn427. Asn518 carries the (3S)-3-hydroxyasparagine; by HIF1AN; partial modification. ANK repeat units follow at residues 525–557 (RQST…AKDK), 558–590 (GGLV…VADL), and 591–623 (WKFT…KKNR). The segment at 545–553 (LLQHGADVH) is HIF1AN-binding. His553 carries the (3S)-3-hydroxyhistidine; by HIF1AN; partial modification. A (3S)-3-hydroxyasparagine; by HIF1AN; partial modification is found at Asn586. (3S)-3-hydroxyasparagine; by HIF1AN; partial occurs at positions 671, 706, and 739. ANK repeat units lie at residues 678 to 710 (RHST…AQDK), 711 to 743 (GGLI…ATDK), and 744 to 776 (WAFT…LKNQ). The tract at residues 819–839 (GATADALSSGPSSPSSLSAAS) is disordered. The span at 822–839 (ADALSSGPSSPSSLSAAS) shows a compositional bias: low complexity. The 64-residue stretch at 873-936 (GVDFSITQFV…IKGVERLISG (64 aa)) folds into the SAM domain. In terms of domain architecture, PARP catalytic spans 959–1164 (SPDDKEFQSV…YQIMRPEGMV (206 aa)). The Zn(2+) site is built by Cys1081, His1084, Cys1089, and Cys1092.

Belongs to the ARTD/PARP family. Oligomerizes and associates with TNKS. Interacts with the cytoplasmic domain of LNPEP/Otase in SLC2A4/GLUT4-vesicles. Binds to the N-terminus of Grb14 and TRF1 with its ankyrin repeat region. Interacts with HIF1AN. Interacts with RNF146; this interaction leads to ubiquitination and proteasomal degradation. Interacts with NUMA1. In terms of processing, ubiquitinated at 'Lys-48' and 'Lys-63' by RNF146 when auto-poly-ADP-ribosylated; this leads to degradation. Deubiquitinated by USP25; leading to stabilization. Post-translationally, ADP-ribosylated (-auto). Poly-ADP-ribosylated protein is recognized by RNF146, followed by ubiquitination. The crystallographic evidence suggests that the 3-hydroxyhistidine may be the (3S) stereoisomer. In terms of tissue distribution, highly expressed in placenta, skeletal muscle, liver, brain, kidney, heart, thymus, spinal cord, lung, peripheral blood leukocytes, pancreas, lymph nodes, spleen, prostate, testis, ovary, small intestine, colon, mammary gland, breast and breast carcinoma, and in common-type meningioma. Highly expressed in fetal liver, heart and brain.

The protein localises to the cytoplasm. It is found in the golgi apparatus membrane. Its subcellular location is the nucleus. It localises to the chromosome. The protein resides in the telomere. It catalyses the reaction NAD(+) + (ADP-D-ribosyl)n-acceptor = nicotinamide + (ADP-D-ribosyl)n+1-acceptor + H(+).. The enzyme catalyses L-aspartyl-[protein] + NAD(+) = 4-O-(ADP-D-ribosyl)-L-aspartyl-[protein] + nicotinamide. The catalysed reaction is L-glutamyl-[protein] + NAD(+) = 5-O-(ADP-D-ribosyl)-L-glutamyl-[protein] + nicotinamide. Its activity is regulated as follows. Specifically inhibited by XAV939, a small molecule, leading to inhibit the Wnt signaling pathway by stabilizing AXIN1 and AXIN2. Inhibited by talazoparib. Poly-ADP-ribosyltransferase involved in various processes such as Wnt signaling pathway, telomere length and vesicle trafficking. Acts as an activator of the Wnt signaling pathway by mediating poly-ADP-ribosylation of AXIN1 and AXIN2, 2 key components of the beta-catenin destruction complex: poly-ADP-ribosylated target proteins are recognized by RNF146, which mediates their ubiquitination and subsequent degradation. Also mediates poly-ADP-ribosylation of BLZF1 and CASC3, followed by recruitment of RNF146 and subsequent ubiquitination. Mediates poly-ADP-ribosylation of TERF1, thereby contributing to the regulation of telomere length. Stimulates 26S proteasome activity. The protein is Poly [ADP-ribose] polymerase tankyrase-2 of Homo sapiens (Human).